We begin with the raw amino-acid sequence, 332 residues long: Phosphoribosylformylglycinamidine cyclo-ligase (332 aa).

The protein belongs to the AIR synthase family.

The protein localises to the cytoplasm. The enzyme catalyses 2-formamido-N(1)-(5-O-phospho-beta-D-ribosyl)acetamidine + ATP = 5-amino-1-(5-phospho-beta-D-ribosyl)imidazole + ADP + phosphate + H(+). Its pathway is purine metabolism; IMP biosynthesis via de novo pathway; 5-amino-1-(5-phospho-D-ribosyl)imidazole from N(2)-formyl-N(1)-(5-phospho-D-ribosyl)glycinamide: step 2/2. In Clostridium acetobutylicum (strain ATCC 824 / DSM 792 / JCM 1419 / IAM 19013 / LMG 5710 / NBRC 13948 / NRRL B-527 / VKM B-1787 / 2291 / W), this protein is Phosphoribosylformylglycinamidine cyclo-ligase.